Here is a 205-residue protein sequence, read N- to C-terminus: Small ribosomal subunit protein bS16 (205 aa).

Residues 110 to 205 (GEEVKIAVGT…ADDNEEPEDE (96 aa)) are disordered. Residues 123-132 (DPLERERERA) show a composition bias toward basic and acidic residues. Over residues 153–205 (EETEAEEAEDVETADAEDADAASETDEPEAAADEADETDASADADDNEEPEDE) the composition is skewed to acidic residues.

The protein belongs to the bacterial ribosomal protein bS16 family.

This is Small ribosomal subunit protein bS16 from Salinibacter ruber (strain DSM 13855 / M31).